Here is a 344-residue protein sequence, read N- to C-terminus: L-rhamnose-proton symporter (344 aa).

A run of 10 helical transmembrane segments spans residues 4-24 (AITMGIFWHLIGAASAACFYA), 38-58 (WSVGGIVSWIILPWAISALLL), 74-94 (LPVFLFGAMWGIGNINYGLTM), 101-121 (MGIGIAIGITLIVGTLMTPII), 137-157 (TLLGVLVALIGVGIVTRAGQL), 175-195 (LVLAVMCGIFSAGMSFAMNAA), 214-234 (LPSYVVIMGGGAIINLGFCFI), 259-279 (VLLSTLGGLMWYLQFFFYAWG), 290-310 (ISWMLHMSFYVLCGGIVGLVL), and 323-343 (VLSLGCVVIIVAANIVGIGMA).

Belongs to the L-rhamnose transporter (TC 2.A.7.6) family.

It is found in the cell inner membrane. It catalyses the reaction L-rhamnopyranose(in) + H(+)(in) = L-rhamnopyranose(out) + H(+)(out). Functionally, uptake of L-rhamnose across the cytoplasmic membrane with the concomitant transport of protons into the cell (symport system). This chain is L-rhamnose-proton symporter, found in Escherichia coli (strain K12 / MC4100 / BW2952).